The chain runs to 123 residues: Periplasmic [Fe] hydrogenase small subunit (123 aa).

The tat-type signal signal peptide spans 1–34 (MQIASITRRGFLKVACVTTGAALIGIRMTGKAVA). A disordered region spans residues 103–123 (TTAGKLPNPRASEFEGPYPYE).

Heterodimer of a large and a small subunit. Predicted to be exported by the Tat system. The position of the signal peptide cleavage has been experimentally proven.

The protein resides in the periplasm. It catalyses the reaction H2 + 2 oxidized [2Fe-2S]-[ferredoxin] = 2 reduced [2Fe-2S]-[ferredoxin] + 2 H(+). Its function is as follows. May be involved in hydrogen uptake for the reduction of sulfate to hydrogen sulfide in an electron transport chain. Cytochrome c3 is likely to be the physiological electron carrier for the enzyme. This is Periplasmic [Fe] hydrogenase small subunit (hydB) from Nitratidesulfovibrio vulgaris (strain ATCC 29579 / DSM 644 / CCUG 34227 / NCIMB 8303 / VKM B-1760 / Hildenborough) (Desulfovibrio vulgaris).